The following is a 70-amino-acid chain: DNA-directed RNA polymerase subunit omega (70 aa).

The protein belongs to the RNA polymerase subunit omega family. The RNAP catalytic core consists of 2 alpha, 1 beta, 1 beta' and 1 omega subunit. When a sigma factor is associated with the core the holoenzyme is formed, which can initiate transcription.

It carries out the reaction RNA(n) + a ribonucleoside 5'-triphosphate = RNA(n+1) + diphosphate. Functionally, promotes RNA polymerase assembly. Latches the N- and C-terminal regions of the beta' subunit thereby facilitating its interaction with the beta and alpha subunits. The chain is DNA-directed RNA polymerase subunit omega from Pelobacter propionicus (strain DSM 2379 / NBRC 103807 / OttBd1).